Reading from the N-terminus, the 201-residue chain is MGKIIGITGGIASGKSTVTNFLRQQGFQAVDADAVVHQLQKPGGRLFEALVQHFGQEIILENGELNRPLLASLIFSNPEEQKWSNQIQGEIIREELATLREQLAQTEEIFFMDIPLLFEQDYSDWFAETWLVYVDRDAQVERLMKRDQLSKDEAESRLAAQWPLEKKKDLASQVLDNNGNQNQLLNQVHILLEGGRQDDRD.

Residues 4–201 form the DPCK domain; that stretch reads IIGITGGIAS…LEGGRQDDRD (198 aa). 12 to 17 contributes to the ATP binding site; it reads ASGKST.

It belongs to the CoaE family.

The protein localises to the cytoplasm. The enzyme catalyses 3'-dephospho-CoA + ATP = ADP + CoA + H(+). Its pathway is cofactor biosynthesis; coenzyme A biosynthesis; CoA from (R)-pantothenate: step 5/5. In terms of biological role, catalyzes the phosphorylation of the 3'-hydroxyl group of dephosphocoenzyme A to form coenzyme A. This chain is Dephospho-CoA kinase, found in Streptococcus pneumoniae (strain ATCC BAA-255 / R6).